Consider the following 304-residue polypeptide: Porphobilinogen deaminase (304 aa).

Cys-240 is subject to S-(dipyrrolylmethanemethyl)cysteine.

The protein belongs to the HMBS family. Monomer. The cofactor is dipyrromethane.

The catalysed reaction is 4 porphobilinogen + H2O = hydroxymethylbilane + 4 NH4(+). It participates in porphyrin-containing compound metabolism; protoporphyrin-IX biosynthesis; coproporphyrinogen-III from 5-aminolevulinate: step 2/4. Tetrapolymerization of the monopyrrole PBG into the hydroxymethylbilane pre-uroporphyrinogen in several discrete steps. This chain is Porphobilinogen deaminase, found in Xanthomonas oryzae pv. oryzae (strain MAFF 311018).